The chain runs to 585 residues: Arginine--tRNA ligase (585 aa).

The short motif at 126–136 is the 'HIGH' region element; sequence PNIAKEMHVGH.

The protein belongs to the class-I aminoacyl-tRNA synthetase family. Monomer.

It localises to the cytoplasm. The catalysed reaction is tRNA(Arg) + L-arginine + ATP = L-arginyl-tRNA(Arg) + AMP + diphosphate. The chain is Arginine--tRNA ligase from Rippkaea orientalis (strain PCC 8801 / RF-1) (Cyanothece sp. (strain PCC 8801)).